A 110-amino-acid polypeptide reads, in one-letter code: NADH-quinone oxidoreductase subunit K (110 aa).

3 consecutive transmembrane segments (helical) span residues 13–33 (VTHG…GIII), 38–58 (ILIL…NFLI), and 70–90 (VFVF…LAIV).

Belongs to the complex I subunit 4L family. As to quaternary structure, NDH-1 is composed of 14 different subunits. Subunits NuoA, H, J, K, L, M, N constitute the membrane sector of the complex.

The protein resides in the cell inner membrane. It catalyses the reaction a quinone + NADH + 5 H(+)(in) = a quinol + NAD(+) + 4 H(+)(out). NDH-1 shuttles electrons from NADH, via FMN and iron-sulfur (Fe-S) centers, to quinones in the respiratory chain. The immediate electron acceptor for the enzyme in this species is believed to be ubiquinone. Couples the redox reaction to proton translocation (for every two electrons transferred, four hydrogen ions are translocated across the cytoplasmic membrane), and thus conserves the redox energy in a proton gradient. The polypeptide is NADH-quinone oxidoreductase subunit K (Francisella tularensis subsp. holarctica (strain FTNF002-00 / FTA)).